A 320-amino-acid chain; its full sequence is Glucosaminate ammonia-lyase (320 aa).

36–43 (TGMQAGGQ) provides a ligand contact to FAD. A disulfide bridge links C136 with C139. 285–294 (DVADHVYRQA) provides a ligand contact to FAD.

This sequence belongs to the class-II pyridine nucleotide-disulfide oxidoreductase family.

The catalysed reaction is 2-amino-2-deoxy-D-gluconate = 2-dehydro-3-deoxy-D-gluconate + NH4(+). Its function is as follows. Catalyzes the conversion of 2-amino-2-deoxy-D-gluconate (GlcNA) to 2-keto-3-deoxy-D-gluconic acid (KDGA) and ammonia. This Pseudomonas fluorescens protein is Glucosaminate ammonia-lyase.